The chain runs to 493 residues: (+)-menthofuran synthase (493 aa).

A topological domain (cytoplasmic) is located at residue M1. The chain crosses the membrane as a helical; Signal-anchor for type II membrane protein span at residues 2–19 (AALLVFFSVSLILLAVLF). The Lumenal segment spans residues 20–493 (HKRKSSLSSR…LLVLATPRQS (474 aa)). N169 is a glycosylation site (N-linked (GlcNAc...) asparagine). C434 contacts heme.

Belongs to the cytochrome P450 family. It depends on heme as a cofactor.

It is found in the membrane. The enzyme catalyses (R)-pulegone + reduced [NADPH--hemoprotein reductase] + O2 = (R)-menthofuran + oxidized [NADPH--hemoprotein reductase] + 2 H2O + H(+). It functions in the pathway secondary metabolite biosynthesis; terpenoid biosynthesis. Monoterpene synthase that catalyzes the formation of (+)-menthofuran from (+)-pulegone. The chain is (+)-menthofuran synthase from Mentha piperita (Peppermint).